The chain runs to 356 residues: Phosphate acyltransferase (356 aa).

It belongs to the PlsX family. As to quaternary structure, homodimer. Probably interacts with PlsY.

It localises to the cytoplasm. It carries out the reaction a fatty acyl-[ACP] + phosphate = an acyl phosphate + holo-[ACP]. Its pathway is lipid metabolism; phospholipid metabolism. Catalyzes the reversible formation of acyl-phosphate (acyl-PO(4)) from acyl-[acyl-carrier-protein] (acyl-ACP). This enzyme utilizes acyl-ACP as fatty acyl donor, but not acyl-CoA. The sequence is that of Phosphate acyltransferase from Shigella sonnei (strain Ss046).